We begin with the raw amino-acid sequence, 178 residues long: Oligoribonuclease (178 aa).

The 162-residue stretch at 7-168 (LIWIDLEMTG…DDIRESIAEL (162 aa)) folds into the Exonuclease domain. Residue tyrosine 128 is part of the active site.

The protein belongs to the oligoribonuclease family.

It localises to the cytoplasm. Functionally, 3'-to-5' exoribonuclease specific for small oligoribonucleotides. The protein is Oligoribonuclease of Pseudomonas savastanoi pv. phaseolicola (strain 1448A / Race 6) (Pseudomonas syringae pv. phaseolicola (strain 1448A / Race 6)).